Reading from the N-terminus, the 145-residue chain is Basic leucine zipper 1 (145 aa).

Polar residues predominate over residues 1 to 11 (MANAEKTSSGS). A disordered region spans residues 1 to 39 (MANAEKTSSGSDIDEKKRKRKLSNRESARRSRLKKQKLM). Residues 14–77 (DEKKRKRKLS…DSVETENAGL (64 aa)) enclose the bZIP domain. Residues 16–37 (KKRKRKLSNRESARRSRLKKQK) form a basic motif region. Residues 46 to 53 (ISSLERRI) are leucine-zipper.

Belongs to the bZIP family. As to quaternary structure, interacts with ZFP7, BZIP4, BZIP9, BZIP10, BZIP11, BZIP25, BZIP42, BZIP44, BZIP53, BZIP58 and BZIP63. As to expression, expressed in both shoots, including young leaves, stipulae and trichomes (except in cotyledons and hypocotyl), and roots, including vascular tissues (e.g. in both the phloem and the xylem). Present in seeds and pollen. Restricted to vasculatures and roots in the presence of sucrose or glucose.

The protein localises to the nucleus. Its function is as follows. Transcription factor that binds to the C-box-like motif (5'-TGCTGACGTCA-3') and G-box-like motif (5'-CCACGTGGCC-3'), ABRE elements, of gene promoters involved in sugar signaling. Activated by low energy stress both at transcriptional and post-transcriptional mechanisms. Promotes dark-induced senescence and participates in the transcriptional reprogramming of amino acid metabolism during the dark-induced starvation response. Transcription activator of the mannan synthase CSLA9. Recognizes and binds to DNA-specific sequence of CSLA9 promoter. This chain is Basic leucine zipper 1 (BZIP1), found in Arabidopsis thaliana (Mouse-ear cress).